We begin with the raw amino-acid sequence, 210 residues long: MADTKEMKKILFAPFLDNNPIALQVLGVCSALAVTTKLETAFVMTLAVMFVTAFSNLFVSLIRNHIPNSVRIIVQMAIIASLVIVVDQVLKAFVYDISKQLSVFVGLIITNCIVMGRAEAYAMKSAPLPSFIDGVGNGLGYGFVLITVAFFRELLGSGKLFGVEVLPLVSDGGWYQPNGLMLLAPSAFFLIGFMIWAIRIIRPAQVEAKE.

A run of 6 helical transmembrane segments spans residues 10-30, 42-62, 72-92, 103-123, 131-151, and 178-198; these read ILFAPFLDNNPIALQVLGVCS, FVMTLAVMFVTAFSNLFVSLI, IIVQMAIIASLVIVVDQVLKA, VFVGLIITNCIVMGRAEAYAM, FIDGVGNGLGYGFVLITVAFF, and NGLMLLAPSAFFLIGFMIWAI.

It belongs to the NqrDE/RnfAE family. As to quaternary structure, composed of six subunits; NqrA, NqrB, NqrC, NqrD, NqrE and NqrF.

It is found in the cell inner membrane. It catalyses the reaction a ubiquinone + n Na(+)(in) + NADH + H(+) = a ubiquinol + n Na(+)(out) + NAD(+). NQR complex catalyzes the reduction of ubiquinone-1 to ubiquinol by two successive reactions, coupled with the transport of Na(+) ions from the cytoplasm to the periplasm. NqrA to NqrE are probably involved in the second step, the conversion of ubisemiquinone to ubiquinol. The protein is Na(+)-translocating NADH-quinone reductase subunit D of Photobacterium profundum (strain SS9).